Consider the following 144-residue polypeptide: Small ribosomal subunit protein bS6 (144 aa).

The interval 97–144 (EEGPSAMMRKADRDRERDERGGPREGGFRSERGPRRPREEETTASVEE) is disordered. Residues 105–137 (RKADRDRERDERGGPREGGFRSERGPRRPREEE) are compositionally biased toward basic and acidic residues.

The protein belongs to the bacterial ribosomal protein bS6 family.

In terms of biological role, binds together with bS18 to 16S ribosomal RNA. The chain is Small ribosomal subunit protein bS6 from Afipia carboxidovorans (strain ATCC 49405 / DSM 1227 / KCTC 32145 / OM5) (Oligotropha carboxidovorans).